Reading from the N-terminus, the 268-residue chain is Regulatory protein zeste (268 aa).

A DNA-binding region spans residues 1 to 72 (TAEEKEVLYT…WLNSRLRKQY (72 aa)). Residues 94 to 108 (VSVASAVPQQQQQQH) show a composition bias toward low complexity. The segment at 94 to 133 (VSVASAVPQQQQQQHHQQHDNVKEEPEYQISPDASEHNPQ) is disordered. Residues 110-119 (QQHDNVKEEP) show a composition bias toward basic and acidic residues.

As to quaternary structure, self-associates forming complexes of several hundred monomers.

The protein resides in the nucleus. In terms of biological role, involved in transvection phenomena (= synapsis-dependent gene expression), where the synaptic pairing of chromosomes carrying genes with which zeste interacts influences the expression of these genes. Zeste binds to DNA and stimulates transcription from a nearby promoter. The sequence is that of Regulatory protein zeste (z) from Drosophila sechellia (Fruit fly).